A 134-amino-acid chain; its full sequence is Protein dpy-30 homolog (134 aa).

The interval 1 to 81 (MEAKTDAPIS…ETNNMPTRQY (81 aa)) is disordered. Positions 31 to 68 (AQANPTAAPGAPPSGAIAVGQSTNPVAQQQQQPAVAKK) are enriched in low complexity. Positions 71 to 81 (SETNNMPTRQY) are enriched in polar residues.

This sequence belongs to the dpy-30 family. In terms of assembly, core component of several methyltransferase-containing complexes. Component of the SET1 complex, composed at least of the catalytic subunit Set1, wds/WDR5, Wdr82, Rbbp5, ash2, Cfp1/CXXC1, hcf and Dpy-30L1. Component of the MLL3/4 complex composed at least of the catalytic subunit trr, ash2, Rbbp5, Dpy-30L1, wds, hcf, ptip, Pa1, Utx, Lpt and Ncoa6. In terms of tissue distribution, expressed in larval brain, gonad, imaginal disk and salivary gland and in adult brain, testis, ovary and salivary gland.

It localises to the nucleus. In terms of biological role, component of the SET1 complex that specifically di- and trimethylates 'Lys-4' of histone H3 and of the MLL3/4 complex which also methylates histone H3 'Lys-4'. Inhibits MTF-1 transcription factor activity. The protein is Protein dpy-30 homolog of Drosophila melanogaster (Fruit fly).